We begin with the raw amino-acid sequence, 275 residues long: NH(3)-dependent NAD(+) synthetase (275 aa).

46 to 53 is an ATP binding site; it reads GISGGQDS. Asp52 contacts Mg(2+). Arg140 is a deamido-NAD(+) binding site. Residue Thr160 participates in ATP binding. Residue Glu165 participates in Mg(2+) binding. Residues Lys173 and Asp180 each coordinate deamido-NAD(+). ATP-binding residues include Lys189 and Thr211. 260 to 261 is a binding site for deamido-NAD(+); the sequence is HK.

It belongs to the NAD synthetase family. As to quaternary structure, homodimer.

It carries out the reaction deamido-NAD(+) + NH4(+) + ATP = AMP + diphosphate + NAD(+) + H(+). The protein operates within cofactor biosynthesis; NAD(+) biosynthesis; NAD(+) from deamido-NAD(+) (ammonia route): step 1/1. Its function is as follows. Catalyzes the ATP-dependent amidation of deamido-NAD to form NAD. Uses ammonia as a nitrogen source. The chain is NH(3)-dependent NAD(+) synthetase from Salmonella dublin (strain CT_02021853).